We begin with the raw amino-acid sequence, 329 residues long: Centromere protein L (329 aa).

2 positions are modified to phosphoserine: Ser40 and Ser54.

Belongs to the CENP-L/IML3 family. As to quaternary structure, component of the CENPA-CAD complex, composed of CENPI, CENPK, CENPL, CENPO, CENPP, CENPQ, CENPR and CENPS. The CENPA-CAD complex interacts with the CENPA-NAC complex, at least composed of CENPA, CENPC, CENPH, CENPM, CENPN, CENPT and CENPU.

The protein resides in the nucleus. It localises to the chromosome. It is found in the centromere. Component of the CENPA-CAD (nucleosome distal) complex, a complex recruited to centromeres which is involved in assembly of kinetochore proteins, mitotic progression and chromosome segregation. May be involved in incorporation of newly synthesized CENPA into centromeres via its interaction with the CENPA-NAC complex. This chain is Centromere protein L (Cenpl), found in Mus musculus (Mouse).